The following is a 668-amino-acid chain: tRNA 5-methylaminomethyl-2-thiouridine biosynthesis bifunctional protein MnmC (668 aa).

The interval 1–245 (MKHYAIQPAN…KREMLCGVME (245 aa)) is tRNA (mnm(5)s(2)U34)-methyltransferase. The tract at residues 270–668 (IGGGIASALL…LLKGKAVKAG (399 aa)) is FAD-dependent cmnm(5)s(2)U34 oxidoreductase.

In the N-terminal section; belongs to the methyltransferase superfamily. tRNA (mnm(5)s(2)U34)-methyltransferase family. This sequence in the C-terminal section; belongs to the DAO family. FAD is required as a cofactor.

It is found in the cytoplasm. It catalyses the reaction 5-aminomethyl-2-thiouridine(34) in tRNA + S-adenosyl-L-methionine = 5-methylaminomethyl-2-thiouridine(34) in tRNA + S-adenosyl-L-homocysteine + H(+). Its function is as follows. Catalyzes the last two steps in the biosynthesis of 5-methylaminomethyl-2-thiouridine (mnm(5)s(2)U) at the wobble position (U34) in tRNA. Catalyzes the FAD-dependent demodification of cmnm(5)s(2)U34 to nm(5)s(2)U34, followed by the transfer of a methyl group from S-adenosyl-L-methionine to nm(5)s(2)U34, to form mnm(5)s(2)U34. The sequence is that of tRNA 5-methylaminomethyl-2-thiouridine biosynthesis bifunctional protein MnmC from Escherichia coli (strain SMS-3-5 / SECEC).